A 225-amino-acid polypeptide reads, in one-letter code: Lectin (225 aa).

As to quaternary structure, homotetramer.

Its function is as follows. Chitin-binding lectin. Agglutinates rabbit erythrocytes, but not human erythrocytes. In Vachellia farnesiana (Sweet acacia), this protein is Lectin.